The primary structure comprises 318 residues: Deacetoxycephalosporin C hydroxylase (318 aa).

Residues 158–271 (DADPVLRLRY…RTSSVFFLRP (114 aa)) enclose the Fe2OG dioxygenase domain.

It belongs to the iron/ascorbate-dependent oxidoreductase family. In terms of assembly, monomer. Fe cation is required as a cofactor.

The catalysed reaction is deacetoxycephalosporin C + 2-oxoglutarate + O2 = deacetylcephalosporin C + succinate + CO2. It functions in the pathway antibiotic biosynthesis; cephalosporin C biosynthesis. Functionally, hydroxylation of desacetoxicephalosporin C in 3'position to form deacetylcephalosporin C. This chain is Deacetoxycephalosporin C hydroxylase (cefF), found in Streptomyces clavuligerus.